A 261-amino-acid chain; its full sequence is Cytochrome c oxidase subunit 3 (261 aa).

The Mitochondrial matrix portion of the chain corresponds to methionine 1 to proline 15. Residues tryptophan 16–tryptophan 34 form a helical membrane-spanning segment. Over phenylalanine 35–methionine 40 the chain is Mitochondrial intermembrane. The chain crosses the membrane as a helical span at residues threonine 41–threonine 66. Over tyrosine 67–threonine 72 the chain is Mitochondrial matrix. The chain crosses the membrane as a helical span at residues proline 73 to serine 105. Over leucine 106–glutamate 128 the chain is Mitochondrial intermembrane. A helical transmembrane segment spans residues valine 129–methionine 152. Residues glutamate 153–asparagine 155 are Mitochondrial matrix-facing. A helical membrane pass occupies residues arginine 156 to glutamate 183. The Mitochondrial intermembrane portion of the chain corresponds to serine 184–aspartate 190. The helical transmembrane segment at glycine 191–leucine 223 threads the bilayer. The Mitochondrial matrix segment spans residues methionine 224–histidine 232. The helical transmembrane segment at phenylalanine 233–isoleucine 256 threads the bilayer. The Mitochondrial intermembrane portion of the chain corresponds to tyrosine 257–serine 261.

It belongs to the cytochrome c oxidase subunit 3 family. In terms of assembly, component of the cytochrome c oxidase (complex IV, CIV), a multisubunit enzyme composed of 14 subunits. The complex is composed of a catalytic core of 3 subunits MT-CO1, MT-CO2 and MT-CO3, encoded in the mitochondrial DNA, and 11 supernumerary subunits COX4I1 (or COX4I2), COX5A, COX5B, COX6A1 (or COX6A2), COX6B1 (or COX6B2), COX6C, COX7A2 (or COX7A1), COX7B, COX7C, COX8A and NDUFA4, which are encoded in the nuclear genome. The complex exists as a monomer or a dimer and forms supercomplexes (SCs) in the inner mitochondrial membrane with NADH-ubiquinone oxidoreductase (complex I, CI) and ubiquinol-cytochrome c oxidoreductase (cytochrome b-c1 complex, complex III, CIII), resulting in different assemblies (supercomplex SCI(1)III(2)IV(1) and megacomplex MCI(2)III(2)IV(2)).

It localises to the mitochondrion inner membrane. It catalyses the reaction 4 Fe(II)-[cytochrome c] + O2 + 8 H(+)(in) = 4 Fe(III)-[cytochrome c] + 2 H2O + 4 H(+)(out). In terms of biological role, component of the cytochrome c oxidase, the last enzyme in the mitochondrial electron transport chain which drives oxidative phosphorylation. The respiratory chain contains 3 multisubunit complexes succinate dehydrogenase (complex II, CII), ubiquinol-cytochrome c oxidoreductase (cytochrome b-c1 complex, complex III, CIII) and cytochrome c oxidase (complex IV, CIV), that cooperate to transfer electrons derived from NADH and succinate to molecular oxygen, creating an electrochemical gradient over the inner membrane that drives transmembrane transport and the ATP synthase. Cytochrome c oxidase is the component of the respiratory chain that catalyzes the reduction of oxygen to water. Electrons originating from reduced cytochrome c in the intermembrane space (IMS) are transferred via the dinuclear copper A center (CU(A)) of subunit 2 and heme A of subunit 1 to the active site in subunit 1, a binuclear center (BNC) formed by heme A3 and copper B (CU(B)). The BNC reduces molecular oxygen to 2 water molecules using 4 electrons from cytochrome c in the IMS and 4 protons from the mitochondrial matrix. The chain is Cytochrome c oxidase subunit 3 (MT-CO3) from Homo sapiens (Human).